A 370-amino-acid chain; its full sequence is Glutamate 5-kinase (370 aa).

Lysine 13 contacts ATP. Residues serine 52, aspartate 139, and asparagine 151 each coordinate substrate. Residues 171–172 (SD) and 211–217 (SGGMKSK) each bind ATP. Residues 275–353 (KGELVLDRGA…AEIEAVLGYR (79 aa)) form the PUA domain.

Belongs to the glutamate 5-kinase family.

The protein localises to the cytoplasm. The enzyme catalyses L-glutamate + ATP = L-glutamyl 5-phosphate + ADP. It functions in the pathway amino-acid biosynthesis; L-proline biosynthesis; L-glutamate 5-semialdehyde from L-glutamate: step 1/2. Its function is as follows. Catalyzes the transfer of a phosphate group to glutamate to form L-glutamate 5-phosphate. The polypeptide is Glutamate 5-kinase (Thermus thermophilus (strain ATCC BAA-163 / DSM 7039 / HB27)).